The following is a 493-amino-acid chain: Probable cytosol aminopeptidase (493 aa).

Mn(2+) is bound by residues Lys-262 and Asp-267. Residue Lys-274 is part of the active site. Residues Asp-286, Asp-345, and Glu-347 each coordinate Mn(2+). Residue Arg-349 is part of the active site.

It belongs to the peptidase M17 family. The cofactor is Mn(2+).

The protein resides in the cytoplasm. It catalyses the reaction Release of an N-terminal amino acid, Xaa-|-Yaa-, in which Xaa is preferably Leu, but may be other amino acids including Pro although not Arg or Lys, and Yaa may be Pro. Amino acid amides and methyl esters are also readily hydrolyzed, but rates on arylamides are exceedingly low.. The enzyme catalyses Release of an N-terminal amino acid, preferentially leucine, but not glutamic or aspartic acids.. Its function is as follows. Presumably involved in the processing and regular turnover of intracellular proteins. Catalyzes the removal of unsubstituted N-terminal amino acids from various peptides. This chain is Probable cytosol aminopeptidase, found in Cyanothece sp. (strain PCC 7425 / ATCC 29141).